We begin with the raw amino-acid sequence, 100 residues long: Urease subunit gamma (100 aa).

The protein belongs to the urease gamma subunit family. Heterotrimer of UreA (gamma), UreB (beta) and UreC (alpha) subunits. Three heterotrimers associate to form the active enzyme.

Its subcellular location is the cytoplasm. The enzyme catalyses urea + 2 H2O + H(+) = hydrogencarbonate + 2 NH4(+). Its pathway is nitrogen metabolism; urea degradation; CO(2) and NH(3) from urea (urease route): step 1/1. The polypeptide is Urease subunit gamma (Pseudomonas syringae pv. syringae (strain B728a)).